Reading from the N-terminus, the 241-residue chain is DNA protection during starvation protein 2 (241 aa).

The segment at 25–65 (GAQSAGNGVPSTNVNTPAPNTGQSTAQNTNTASPLPYNRAT) is disordered. Residues 33–57 (VPSTNVNTPAPNTGQSTAQNTNTAS) show a composition bias toward polar residues. Fe cation-binding residues include His100, Asp127, and Glu131. Polar residues predominate over residues 220–229 (TPTDPNTGFD). Residues 220 to 241 (TPTDPNTGFDINNGKPVPLRGR) form a disordered region.

It belongs to the Dps family. As to quaternary structure, homododecamer. The 12 subunits form a hollow sphere into which the mineral iron core of up to 500 Fe(3+) can be deposited.

The protein resides in the cytoplasm. It catalyses the reaction 2 Fe(2+) + H2O2 + 2 H(+) = 2 Fe(3+) + 2 H2O. Functionally, protects DNA from oxidative damage by sequestering intracellular Fe(2+) ion and storing it in the form of Fe(3+) oxyhydroxide mineral. One hydrogen peroxide oxidizes two Fe(2+) ions, which prevents hydroxyl radical production by the Fenton reaction. This is DNA protection during starvation protein 2 (dps2) from Deinococcus radiodurans (strain ATCC 13939 / DSM 20539 / JCM 16871 / CCUG 27074 / LMG 4051 / NBRC 15346 / NCIMB 9279 / VKM B-1422 / R1).